The chain runs to 842 residues: GPI ethanolamine phosphate transferase 2 (842 aa).

N-linked (GlcNAc...) asparagine glycosylation is present at Asn186. A helical membrane pass occupies residues 409–429 (YNYPLLFIGCFLSIVITGTIY). The N-linked (GlcNAc...) asparagine glycan is linked to Asn441. A run of 2 helical transmembrane segments spans residues 442–462 (TSILIAIAALMGISVFGSSFI) and 468–488 (FWWWIITGLVLLSMVNLNFSS). The N-linked (GlcNAc...) asparagine glycan is linked to Asn506. A helical transmembrane segment spans residues 524–544 (GNIDALWWLNLITVTVVGLNL). Asn551 is a glycosylation site (N-linked (GlcNAc...) asparagine). The helical transmembrane segment at 554 to 574 (VSLLGFSDLLSMGLLSMITFL) threads the bilayer. N-linked (GlcNAc...) asparagine glycosylation occurs at Asn578. Helical transmembrane passes span 615–635 (IHTALIPLARIFFKLFFAVLV), 698–718 (YLLAVIFGIILQFFTFFQSGG), and 740–760 (IYVVGLMMCISNFAPTIYWSF). The N-linked (GlcNAc...) asparagine glycan is linked to Asn771. The next 2 membrane-spanning stretches (helical) occupy residues 783-803 (YPFIIIQSTIGCCLLLACIIL) and 821-841 (MVWTIFVGIIVHWIPEILLLL).

The protein belongs to the PIGG/PIGN/PIGO family. PIGG subfamily.

The protein localises to the endoplasmic reticulum membrane. It functions in the pathway glycolipid biosynthesis; glycosylphosphatidylinositol-anchor biosynthesis. Functionally, ethanolamine phosphate transferase involved in glycosylphosphatidylinositol-anchor biosynthesis. Transfers ethanolamine phosphate to the GPI second mannose. The chain is GPI ethanolamine phosphate transferase 2 (LAS21) from Candida glabrata (strain ATCC 2001 / BCRC 20586 / JCM 3761 / NBRC 0622 / NRRL Y-65 / CBS 138) (Yeast).